Reading from the N-terminus, the 128-residue chain is MTGFRDQLGVHAQALVLRETRNNLLTSNIANAATPHYKARDIDFGAELARASGNGTLRTTEARHFAAGGPAARGEALYRDPVSPSLDGNTVEMAVEQMEFAENTLRYQTSLALLNRRISGLMTAIKGE.

The protein belongs to the flagella basal body rod proteins family. As to quaternary structure, the basal body constitutes a major portion of the flagellar organelle and consists of a number of rings mounted on a central rod. In Gram-negative bacteria, at least four rings, L, P, S and M are present, whereas Gram-positive bacteria lack the L and P rings. The rod consists of about 26 subunits of FlgG in the distal portion, and FlgB, FlgC and FlgF build up the proximal portion of the rod with about 6 subunits each. Rod assembly occurs by export via the flagellum-specific pathway of its constituent proteins and by their incorporation into the rod structure in the probable order of FlgB, FlgC, FlgF and FlgG. Another protein, FliE, also assembles onto the stable rod structure.

It is found in the bacterial flagellum basal body. Its function is as follows. Structural component of flagellum, the bacterial motility apparatus. Part of the rod structure of flagellar basal body. This is Flagellar basal body rod protein FlgB from Cereibacter sphaeroides (strain ATCC 17029 / ATH 2.4.9) (Rhodobacter sphaeroides).